A 402-amino-acid polypeptide reads, in one-letter code: MPGAGGKKKSPWASGERRPHFFKVLVGDFKQRLKIPPNFCKHIPWEESRKAKGLKEASMAATLEGPSGRTWLVVIRRTAEGTFFTSGWPKFVQDQALRELEFVVFRYDGNTRFTAMVFDRTACEREDLMGGGGGDRPRKKRGRPRTAAASRDAARPKKDSVGKEMVTYRASPSGGQPLQIVDSSWTPEPGSTAVKNEEDADELPVCELPASSASPPRHVPEGALDADGGAARRGAAKTRSLQDDLALASIPPSIRRYKGYVSRRRAVATAERQRATEIAHAFRSPLPYCVIRMSTMHVYYSFMMRFPTGFSRQHLPRERTDVVLRDPGGKVWSVLYIPNTRDRLSRGWCAFARGNCLEEGDYCVFELVAAAEFRVHIFRVVEPAVPAVRLRRVTVTCGRGPT.

The segment at residues 18–121 (RPHFFKVLVG…RFTAMVFDRT (104 aa)) is a DNA-binding region (TF-B3 1). The segment at 126–203 (EDLMGGGGGD…VKNEEDADEL (78 aa)) is disordered. Positions 152–162 (DAARPKKDSVG) are enriched in basic and acidic residues. Residues 173 to 186 (SGGQPLQIVDSSWT) show a composition bias toward polar residues. The TF-B3 2 DNA-binding region spans 289-381 (CVIRMSTMHV…EFRVHIFRVV (93 aa)).

The protein localises to the nucleus. This Oryza sativa subsp. japonica (Rice) protein is B3 domain-containing protein Os01g0723500.